The primary structure comprises 312 residues: DNA-directed RNA polymerase subunit alpha (312 aa).

An alpha N-terminal domain (alpha-NTD) region spans residues 1–226 (MIEFEKPKIT…DHLNLFVDLS (226 aa)). Residues 243-312 (TERVLDKIIE…ELGLSLKKRK (70 aa)) are alpha C-terminal domain (alpha-CTD).

This sequence belongs to the RNA polymerase alpha chain family. Homodimer. The RNAP catalytic core consists of 2 alpha, 1 beta, 1 beta' and 1 omega subunit. When a sigma factor is associated with the core the holoenzyme is formed, which can initiate transcription.

It catalyses the reaction RNA(n) + a ribonucleoside 5'-triphosphate = RNA(n+1) + diphosphate. Functionally, DNA-dependent RNA polymerase catalyzes the transcription of DNA into RNA using the four ribonucleoside triphosphates as substrates. The protein is DNA-directed RNA polymerase subunit alpha of Lactococcus lactis subsp. lactis (strain IL1403) (Streptococcus lactis).